Reading from the N-terminus, the 214-residue chain is Redox-sensing transcriptional repressor Rex (214 aa).

The segment at residues 16–55 (LYYRYLIFLNDEGKEKVSSTELAEAVQVDSASIRRDFSYF) is a DNA-binding region (H-T-H motif). 90–95 (GVGNMG) contributes to the NAD(+) binding site.

It belongs to the transcriptional regulatory Rex family. Homodimer.

It is found in the cytoplasm. Its function is as follows. Modulates transcription in response to changes in cellular NADH/NAD(+) redox state. In Lactobacillus gasseri (strain ATCC 33323 / DSM 20243 / BCRC 14619 / CIP 102991 / JCM 1131 / KCTC 3163 / NCIMB 11718 / NCTC 13722 / AM63), this protein is Redox-sensing transcriptional repressor Rex.